The chain runs to 579 residues: Tyrosine 3-monooxygenase (579 aa).

Residues Val-105–Gln-114 show a composition bias toward acidic residues. The segment at Val-105–Asp-132 is disordered. His-409, His-414, and Glu-454 together coordinate Fe cation.

This sequence belongs to the biopterin-dependent aromatic amino acid hydroxylase family. Requires Fe(2+) as cofactor.

The protein localises to the cytoplasm. Its subcellular location is the perinuclear region. It is found in the cell projection. The protein resides in the axon. The enzyme catalyses (6R)-L-erythro-5,6,7,8-tetrahydrobiopterin + L-tyrosine + O2 = (4aS,6R)-4a-hydroxy-L-erythro-5,6,7,8-tetrahydrobiopterin + L-dopa. It participates in catecholamine biosynthesis; dopamine biosynthesis; dopamine from L-tyrosine: step 1/2. With respect to regulation, phosphorylation leads to an increase in the catalytic activity. In terms of biological role, plays an important role in the physiology of adrenergic neurons. This chain is Tyrosine 3-monooxygenase (ple), found in Drosophila melanogaster (Fruit fly).